Consider the following 349-residue polypeptide: Nucleoporin SEH1 (349 aa).

WD repeat units lie at residues Gly7 to Glu46, Ala53 to Ser94, Asp106 to Ser147, Glu153 to Ile192, and Gly210 to Ala253. The residue at position 257 (Ser257) is a Phosphoserine. A disordered region spans residues Met263–Lys285. Residues Ala274–Lys285 are compositionally biased toward basic and acidic residues. The WD 6 repeat unit spans residues Asp302–Cys341.

This sequence belongs to the WD repeat SEC13 family. In terms of assembly, component of the nuclear pore complex (NPC). NPC constitutes the exclusive means of nucleocytoplasmic transport. NPCs allow the passive diffusion of ions and small molecules and the active, nuclear transport receptor-mediated bidirectional transport of macromolecules such as proteins, RNAs, ribonucleoparticles (RNPs), and ribosomal subunits across the nuclear envelope. Due to its 8-fold rotational symmetry, all subunits are present with 8 copies or multiples thereof. SEH1 is part of the heptameric 0.5 MDa autoassembling NUP84 NPC subcomplex (NUP84, NUP85, NUP120, NUP133, NUP145C, SEC13 and SEH1). Component of the SEA complex composed of at least IML1/SEA1, RTC1/SEA2, MTC5/SEA3, NPR2, NPR3, SEA4, SEC13 and SEH1.

The protein resides in the nucleus. The protein localises to the nuclear pore complex. It is found in the nucleus membrane. Its subcellular location is the vacuole membrane. Its function is as follows. Functions as a component of the nuclear pore complex (NPC). NPC components, collectively referred to as nucleoporins (NUPs), can play the role of both NPC structural components and of docking or interaction partners for transiently associated nuclear transport factors. Involved in nuclear poly(A)+ RNA export and NPC biogenesis. It is also required for normal nuclear morphology. Component of the SEA complex which coats the vacuolar membrane and is involved in intracellular trafficking, autophagy, response to nitrogen starvation, and amino acid biogenesis. This is Nucleoporin SEH1 (SEH1) from Saccharomyces cerevisiae (strain ATCC 204508 / S288c) (Baker's yeast).